We begin with the raw amino-acid sequence, 257 residues long: Probable amino-acid ABC transporter-binding protein HI_1080 (257 aa).

The N-terminal stretch at 1–23 is a signal peptide; sequence MKKLLFTTALLTGAIAFSTFSHA.

It belongs to the bacterial solute-binding protein 3 family.

It is found in the periplasm. Its function is as follows. Probably part of a binding-protein-dependent transport system for an amino acid. This Haemophilus influenzae (strain ATCC 51907 / DSM 11121 / KW20 / Rd) protein is Probable amino-acid ABC transporter-binding protein HI_1080.